The primary structure comprises 557 residues: Large cysteine-rich periplasmic protein omcB (557 aa).

An N-terminal signal peptide occupies residues 1–22; sequence MSKLIRRVVTVLALTSMASSFA. A propeptide spanning residues 23-40 is cleaved from the precursor; sequence SGKIEAAAAESLATRFIA.

In terms of assembly, part of a disulfide cross-linked outer membrane complex (COMC) composed of the major outer membrane porin (MOMP), the small cysteine-rich protein (omcA) and the large cysteine-rich periplasmic protein (omcB).

It is found in the periplasm. Its function is as follows. In elementary bodies (EBs, the infectious stage, which is able to survive outside the host cell) provides the structural integrity of the outer envelope through disulfide cross-links with the small cysteine-rich protein and the major outer membrane porin. It has been described in publications as the Sarkosyl-insoluble COMC (Chlamydia outer membrane complex), and serves as the functional equivalent of peptidoglycan. The protein is Large cysteine-rich periplasmic protein omcB (omcB) of Chlamydia psittaci (Chlamydophila psittaci).